The sequence spans 361 residues: Glycerophosphodiester phosphodiesterase GDPD1, chloroplastic (361 aa).

Residues 1 to 53 constitute a chloroplast transit peptide; it reads MSLKAIHVSEVPSLDHFPENPSLICSSRKANNKFVVVGHRGHGMNMSQSPDLR. The 270-residue stretch at 54–323 folds into the GP-PDE domain; the sequence is FSALKENSIL…DHVEEITEAV (270 aa).

Belongs to the glycerophosphoryl diester phosphodiesterase family. Requires Mg(2+) as cofactor. As to expression, expressed in roots, shoots, rosette leaves, stems, flowers and siliques.

It is found in the plastid. The protein localises to the chloroplast. It carries out the reaction a sn-glycero-3-phosphodiester + H2O = an alcohol + sn-glycerol 3-phosphate + H(+). Functionally, hydrolyzes glycerolphosphoglycerol, glycerophosphocholine and glycerophosphoethanolamine in vitro. May be involved in release of inorganic phosphate (Pi) from phospholipids during Pi starvation. The chain is Glycerophosphodiester phosphodiesterase GDPD1, chloroplastic from Arabidopsis thaliana (Mouse-ear cress).